The following is a 95-amino-acid chain: Aspartyl/glutamyl-tRNA(Asn/Gln) amidotransferase subunit C (95 aa).

This sequence belongs to the GatC family. In terms of assembly, heterotrimer of A, B and C subunits.

It catalyses the reaction L-glutamyl-tRNA(Gln) + L-glutamine + ATP + H2O = L-glutaminyl-tRNA(Gln) + L-glutamate + ADP + phosphate + H(+). The enzyme catalyses L-aspartyl-tRNA(Asn) + L-glutamine + ATP + H2O = L-asparaginyl-tRNA(Asn) + L-glutamate + ADP + phosphate + 2 H(+). Its function is as follows. Allows the formation of correctly charged Asn-tRNA(Asn) or Gln-tRNA(Gln) through the transamidation of misacylated Asp-tRNA(Asn) or Glu-tRNA(Gln) in organisms which lack either or both of asparaginyl-tRNA or glutaminyl-tRNA synthetases. The reaction takes place in the presence of glutamine and ATP through an activated phospho-Asp-tRNA(Asn) or phospho-Glu-tRNA(Gln). In Syntrophus aciditrophicus (strain SB), this protein is Aspartyl/glutamyl-tRNA(Asn/Gln) amidotransferase subunit C.